The chain runs to 294 residues: Indole-3-glycerol phosphate synthase (294 aa).

Belongs to the TrpC family.

It carries out the reaction 1-(2-carboxyphenylamino)-1-deoxy-D-ribulose 5-phosphate + H(+) = (1S,2R)-1-C-(indol-3-yl)glycerol 3-phosphate + CO2 + H2O. It participates in amino-acid biosynthesis; L-tryptophan biosynthesis; L-tryptophan from chorismate: step 4/5. The sequence is that of Indole-3-glycerol phosphate synthase from Synechococcus sp. (strain CC9902).